A 480-amino-acid polypeptide reads, in one-letter code: Ribulose bisphosphate carboxylase large chain (480 aa).

A propeptide spanning residues 1–2 (MS) is cleaved from the precursor. Pro3 carries the post-translational modification N-acetylproline. Lys14 is modified (N6,N6,N6-trimethyllysine). Residues Asn123 and Thr173 each coordinate substrate. Lys175 acts as the Proton acceptor in catalysis. Substrate is bound at residue Lys177. Mg(2+) is bound by residues Lys201, Asp203, and Glu204. Position 201 is an N6-carboxylysine (Lys201). His294 serves as the catalytic Proton acceptor. Substrate is bound by residues Arg295, His327, and Ser379.

Belongs to the RuBisCO large chain family. Type I subfamily. In terms of assembly, heterohexadecamer of 8 large chains and 8 small chains; disulfide-linked. The disulfide link is formed within the large subunit homodimers. Requires Mg(2+) as cofactor. Post-translationally, the disulfide bond which can form in the large chain dimeric partners within the hexadecamer appears to be associated with oxidative stress and protein turnover.

Its subcellular location is the plastid. It is found in the chloroplast. It catalyses the reaction 2 (2R)-3-phosphoglycerate + 2 H(+) = D-ribulose 1,5-bisphosphate + CO2 + H2O. The enzyme catalyses D-ribulose 1,5-bisphosphate + O2 = 2-phosphoglycolate + (2R)-3-phosphoglycerate + 2 H(+). RuBisCO catalyzes two reactions: the carboxylation of D-ribulose 1,5-bisphosphate, the primary event in carbon dioxide fixation, as well as the oxidative fragmentation of the pentose substrate in the photorespiration process. Both reactions occur simultaneously and in competition at the same active site. The sequence is that of Ribulose bisphosphate carboxylase large chain from Alluaudia procera (Madagascan ocotillo).